A 406-amino-acid chain; its full sequence is Ribose-phosphate pyrophosphokinase 3, mitochondrial (406 aa).

Residues 1-32 (MAATPHRHLLQPCKNPAISSSETLKPSSSFSL) are disordered. The N-terminal 87 residues, 1-87 (MAATPHRHLL…RRFQMSSNQE (87 aa)), are a transit peptide targeting the mitochondrion. The span at 18-32 (ISSSETLKPSSSFSL) shows a compositional bias: low complexity. Residues D226 and H228 each coordinate Mg(2+). The tract at residues 309–324 (GRHVVIVDDLVQSGGT) is binding of phosphoribosylpyrophosphate.

It belongs to the ribose-phosphate pyrophosphokinase family.

It is found in the mitochondrion. It carries out the reaction D-ribose 5-phosphate + ATP = 5-phospho-alpha-D-ribose 1-diphosphate + AMP + H(+). This Spinacia oleracea (Spinach) protein is Ribose-phosphate pyrophosphokinase 3, mitochondrial (PRS3).